A 183-amino-acid chain; its full sequence is Tail fiber assembly protein (183 aa).

It belongs to the tfa family.

Chaperone involved, together with gp57, in the assembly of the distal-half tail fiber of T4. It is necessary for the maturation of protein gp37 to the dimeric structural subunit P37. The sequence is that of Tail fiber assembly protein (38) from Escherichia coli (Bacteriophage T4).